We begin with the raw amino-acid sequence, 194 residues long: Ion-translocating oxidoreductase complex subunit A (194 aa).

6 helical membrane passes run 4-24 (LALI…QFLG), 39-59 (IGLS…SYIL), 71-91 (FLRT…TEML), 102-122 (VLGI…VALL), 135-155 (TTQG…FAAL), and 172-192 (AIGM…SGLI).

Belongs to the NqrDE/RnfAE family. In terms of assembly, the complex is composed of six subunits: RnfA, RnfB, RnfC, RnfD, RnfE and RnfG.

Its subcellular location is the cell inner membrane. Functionally, part of a membrane-bound complex that couples electron transfer with translocation of ions across the membrane. The sequence is that of Ion-translocating oxidoreductase complex subunit A from Pseudomonas paraeruginosa (strain DSM 24068 / PA7) (Pseudomonas aeruginosa (strain PA7)).